We begin with the raw amino-acid sequence, 495 residues long: NADH-ubiquinone oxidoreductase chain 4 (495 aa).

The next 15 membrane-spanning stretches (helical) occupy residues 9-29, 39-59, 89-109, 118-138, 139-159, 173-193, 214-234, 245-265, 272-292, 313-333, 335-355, 367-387, 388-408, 413-433, and 457-477; these read YFDL…LLFI, LIGL…WIQF, LSLF…LVGW, EYII…CMLD, LLLF…IIGV, FFLY…LILL, ILLW…VPVH, PTAG…YGFL, FPEA…IAII, VAHM…GIGG, ILLM…VGVL, YGGL…FTLA, NMSL…VGAF, LVAT…LWLY, and VFIF…PKVF.

It belongs to the complex I subunit 4 family.

It localises to the mitochondrion membrane. The enzyme catalyses a ubiquinone + NADH + 5 H(+)(in) = a ubiquinol + NAD(+) + 4 H(+)(out). In terms of biological role, core subunit of the mitochondrial membrane respiratory chain NADH dehydrogenase (Complex I) that is believed to belong to the minimal assembly required for catalysis. Complex I functions in the transfer of electrons from NADH to the respiratory chain. The immediate electron acceptor for the enzyme is believed to be ubiquinone. The sequence is that of NADH-ubiquinone oxidoreductase chain 4 (ND4) from Triticum aestivum (Wheat).